The chain runs to 429 residues: Saccharopine dehydrogenase-like oxidoreductase (429 aa).

Alanine 2 is modified (N-acetylalanine). Serine 217 carries the post-translational modification Phosphoserine.

The protein belongs to the saccharopine dehydrogenase family.

This chain is Saccharopine dehydrogenase-like oxidoreductase (SCCPDH), found in Homo sapiens (Human).